A 374-amino-acid polypeptide reads, in one-letter code: Putative serine/threonine-protein kinase ZK507.3 (374 aa).

The region spanning 25-296 (WKVIVELGKG…CKLTLKEPLV (272 aa)) is the Protein kinase domain. ATP-binding positions include 31–39 (LGKGGYGTV) and Lys60. Asp158 acts as the Proton acceptor in catalysis. The interval 302 to 374 (NDNESGSTPT…KTRNKKPSRK (73 aa)) is disordered. Positions 306-324 (SGSTPTTSATACSPSSSTG) are enriched in low complexity. A compositionally biased stretch (polar residues) spans 334 to 343 (IASNIDQKSI). The segment covering 364 to 374 (TKTRNKKPSRK) has biased composition (basic residues).

It belongs to the protein kinase superfamily. Ser/Thr protein kinase family.

It catalyses the reaction L-seryl-[protein] + ATP = O-phospho-L-seryl-[protein] + ADP + H(+). The enzyme catalyses L-threonyl-[protein] + ATP = O-phospho-L-threonyl-[protein] + ADP + H(+). This is Putative serine/threonine-protein kinase ZK507.3 from Caenorhabditis elegans.